Reading from the N-terminus, the 131-residue chain is Small ribosomal subunit protein uS8 (131 aa).

The protein belongs to the universal ribosomal protein uS8 family. As to quaternary structure, part of the 30S ribosomal subunit. Contacts proteins S5 and S12.

Functionally, one of the primary rRNA binding proteins, it binds directly to 16S rRNA central domain where it helps coordinate assembly of the platform of the 30S subunit. This chain is Small ribosomal subunit protein uS8, found in Janthinobacterium sp. (strain Marseille) (Minibacterium massiliensis).